A 141-amino-acid chain; its full sequence is Large ribosomal subunit protein uL11 (141 aa).

The protein belongs to the universal ribosomal protein uL11 family. Part of the ribosomal stalk of the 50S ribosomal subunit. Interacts with L10 and the large rRNA to form the base of the stalk. L10 forms an elongated spine to which L12 dimers bind in a sequential fashion forming a multimeric L10(L12)X complex. In terms of processing, one or more lysine residues are methylated.

Functionally, forms part of the ribosomal stalk which helps the ribosome interact with GTP-bound translation factors. The protein is Large ribosomal subunit protein uL11 of Trichodesmium erythraeum (strain IMS101).